Reading from the N-terminus, the 86-residue chain is Small ribosomal subunit protein uS17 (86 aa).

The protein belongs to the universal ribosomal protein uS17 family. Part of the 30S ribosomal subunit.

Its function is as follows. One of the primary rRNA binding proteins, it binds specifically to the 5'-end of 16S ribosomal RNA. This Streptococcus pyogenes serotype M3 (strain ATCC BAA-595 / MGAS315) protein is Small ribosomal subunit protein uS17.